The following is a 360-amino-acid chain: DNA replication and repair protein RecF (360 aa).

33 to 40 (GENGSGKT) is an ATP binding site.

It belongs to the RecF family.

The protein resides in the cytoplasm. Functionally, the RecF protein is involved in DNA metabolism; it is required for DNA replication and normal SOS inducibility. RecF binds preferentially to single-stranded, linear DNA. It also seems to bind ATP. This is DNA replication and repair protein RecF from Rickettsia bellii (strain OSU 85-389).